The following is a 1505-amino-acid chain: Probable serine/threonine-protein kinase DDB_G0280133 (1505 aa).

PAS domains follow at residues 2 to 72, 108 to 178, and 215 to 284; these read NTHN…FETG, RMFI…YHGG, and DMFK…TDSH. Disordered stretches follow at residues 282 to 348 and 398 to 533; these read DSHD…FNHS and RVYG…ESSY. Composition is skewed to low complexity over residues 289 to 314 and 328 to 344; these read QQQQ…TTST and SSPP…TPTT. 2 stretches are compositionally biased toward basic and acidic residues: residues 398–407 and 415–430; these read RVYGKDKDKN and ENKD…ESKE. Residues 431 to 443 are compositionally biased toward basic residues; the sequence is HRHSKEKKKRKKD. A compositionally biased stretch (low complexity) spans 448-468; sequence NNNNNNNNNNNNNNEQTSDSS. The span at 479–489 shows a compositional bias: basic residues; sequence SKKKRSSKKKS. Positions 515-532 are enriched in low complexity; it reads SSNSSSNSSHSNAPHESS. The Protein kinase domain occupies 542 to 805; that stretch reads YTLGKTLGRG…IMNVLNHPWL (264 aa). ATP is bound by residues 548–556 and Lys571; that span reads LGRGNYGVV. Asp684 acts as the Proton acceptor in catalysis. A compositionally biased stretch (low complexity) spans 855–960; it reads NILNNNNNNN…NNTNSIINNN (106 aa). 3 disordered regions span residues 855-1048, 1072-1091, and 1181-1358; these read NILN…SHQQ, QPNQ…QLQQ, and QQQQ…DEEN. Residues 903 to 939 are a coiled coil; that stretch reads NNNNNINNNINNNNNVNNNVNNNKNNNNNNNNNSNNN. The span at 961-974 shows a compositional bias: polar residues; it reads LYNQSLSPQNNNIY. Composition is skewed to low complexity over residues 975–1013 and 1022–1048; these read QHSP…QQQH and QQHQ…SHQQ. Polar residues predominate over residues 1072–1082; that stretch reads QPNQQVSFDTN. Residues 1125–1189 adopt a coiled-coil conformation; that stretch reads IQQIQQLQQQ…QQQQQQQQND (65 aa). Residues 1202–1271 are compositionally biased toward basic and acidic residues; sequence SKRDNSYNKR…NSRDNNRYNN (70 aa). Residues 1272–1282 are compositionally biased toward low complexity; sequence RDNNNNNNSNN. 2 stretches are compositionally biased toward basic and acidic residues: residues 1283–1301 and 1313–1326; these read NRER…DYGK and NKDK…KPDF. A compositionally biased stretch (polar residues) spans 1331–1347; it reads SLKNDSSSNYGTISSGR. In terms of domain architecture, FHA spans 1399 to 1463; sequence FLFGRNRDIA…NGTFLKGEKI (65 aa).

Belongs to the protein kinase superfamily. CAMK Ser/Thr protein kinase family. SNF1 subfamily.

It carries out the reaction L-seryl-[protein] + ATP = O-phospho-L-seryl-[protein] + ADP + H(+). The catalysed reaction is L-threonyl-[protein] + ATP = O-phospho-L-threonyl-[protein] + ADP + H(+). In Dictyostelium discoideum (Social amoeba), this protein is Probable serine/threonine-protein kinase DDB_G0280133.